Consider the following 507-residue polypeptide: Photosystem II CP47 reaction center protein (507 aa).

Residues 2–16 (GLPWYRVHTVVLNDP) lie on the Cytoplasmic side of the membrane. The helical transmembrane segment at 17 to 39 (GRLISVHLMHTALVAGWAGSMAL) threads the bilayer. The Lumenal, thylakoid portion of the chain corresponds to 40 to 94 (YELAIFDSSDAVLNPMWRQGMFVLPFMARLGVTSSWNGWSVTGETGLDPGFWSFE). Residues 95 to 116 (GVAAAHIVLSGLLFLAAVWHWV) traverse the membrane as a helical segment. Topologically, residues 117–134 (FWDLELFVDPRTGESALD) are cytoplasmic. Residues 135-159 (LPKMFGIHLFLSGLLCFGFGAFHLT) traverse the membrane as a helical segment. Residues 160-196 (GVWGPGMWVSDPYGLTGHVQPVAPEWGPAGFNPFNPG) are Lumenal, thylakoid-facing. The helical transmembrane segment at 197 to 218 (GVVAHHIAAGIVGIIAGLFHLT) threads the bilayer. At 219–233 (VRPPERLYKALRMGN) the chain is on the cytoplasmic side. The helical transmembrane segment at 234–255 (IETVLSSSIAAVFFAAFVVAGT) threads the bilayer. Residues 256–450 (MWYGNATTPI…GVFRTSPRGW (195 aa)) lie on the Lumenal, thylakoid side of the membrane. The chain crosses the membrane as a helical span at residues 451–474 (FTFGHAVFALLFFFGHIWHGSRTL). Residues 475-507 (FRDVFAGVDPGLEEQVEFGVFAKVGDLSTRKEA) lie on the Cytoplasmic side of the membrane.

This sequence belongs to the PsbB/PsbC family. PsbB subfamily. PSII is composed of 1 copy each of membrane proteins PsbA, PsbB, PsbC, PsbD, PsbE, PsbF, PsbH, PsbI, PsbJ, PsbK, PsbL, PsbM, PsbT, PsbX, Psb30/Ycf12, peripheral proteins PsbO, CyanoQ (PsbQ), PsbU, PsbV and a large number of cofactors. It forms dimeric complexes. Contacts PsbQ. Binds multiple chlorophylls. PSII binds additional chlorophylls, carotenoids and specific lipids. is required as a cofactor.

It localises to the cellular thylakoid membrane. Functionally, one of the components of the core complex of photosystem II (PSII). It binds chlorophyll and helps catalyze the primary light-induced photochemical processes of PSII. PSII is a light-driven water:plastoquinone oxidoreductase, using light energy to abstract electrons from H(2)O, generating O(2) and a proton gradient subsequently used for ATP formation. This Synechocystis sp. (strain ATCC 27184 / PCC 6803 / Kazusa) protein is Photosystem II CP47 reaction center protein.